The chain runs to 454 residues: ABSCISIC ACID-INSENSITIVE 5-like protein 6 (454 aa).

Serine 32, serine 55, and serine 126 each carry phosphoserine. Threonine 169 is subject to Phosphothreonine. Residues 372 to 435 form the bZIP domain; it reads IERRQKRMIK…KNQLLEPLRQ (64 aa). The segment at 374–393 is basic motif; sequence RRQKRMIKNRESAARSRARK. The tract at residues 400 to 414 is leucine-zipper; sequence LEAEIAQLKELNEEL.

It belongs to the bZIP family. ABI5 subfamily. In terms of assembly, DNA-binding heterodimer. Interacts with ABI3 and the AFP proteins AFP1, AFP2, AFP3 and AFP4. In terms of tissue distribution, expressed in roots and flowers.

It is found in the nucleus. Its function is as follows. Binds to the ABA-responsive element (ABRE). Mediates stress-responsive ABA signaling. In Arabidopsis thaliana (Mouse-ear cress), this protein is ABSCISIC ACID-INSENSITIVE 5-like protein 6 (ABF3).